The primary structure comprises 1390 residues: General transcriptional corepressor trfA (1390 aa).

Positions 53 to 143 are disordered; sequence QQQQQHQQHQ…QQQQQQQQQQ (91 aa). TPR repeat units lie at residues 171–204, 206–238, 239–272, 275–308, 312–345, 349–382, 384–419, 420–453, 454–487, and 489–521; these read ESIW…NPFS, KALT…ESKN, GEVW…LPNP, PNLW…DNKF, TEIY…PPLP, SDIW…NATH, KVLQ…DSSD, AQTW…DGRN, PTFW…NPFL, and EVWY…DPHN. Disordered regions lie at residues 539 to 596, 632 to 938, and 958 to 1390; these read PIGK…NSFV, ERGR…YNNI, and LDEE…KLER. Over residues 540–557 the composition is skewed to basic and acidic residues; that stretch reads IGKDGYDLQNGEHGEHGG. The segment covering 582 to 593 has biased composition (low complexity); sequence QNNRNGNNNGNN. Residues 632-641 are compositionally biased toward basic and acidic residues; that stretch reads ERGRGEDMHN. A compositionally biased stretch (low complexity) spans 644-744; that stretch reads HSQYSNSMSM…MNDNVNSKNN (101 aa). The segment covering 745 to 803 has biased composition (basic and acidic residues); sequence DVLDRRYKGILEREKTSPNGDGRDNRDNIRDNRDNRDSRDGRDNRDGRDSRDRIQEYTR. Residues 805–846 are compositionally biased toward low complexity; the sequence is YNNNNNNNNSISSINNNNNNNNNNYNNNNNNNNNNNNNNNNN. Over residues 857–871 the composition is skewed to basic and acidic residues; sequence HNDRRSYERDNKERI. 2 stretches are compositionally biased toward low complexity: residues 872–898 and 917–937; these read NNNN…NNNN and NNSN…NYNN. 4 stretches are compositionally biased toward basic and acidic residues: residues 977–993, 1000–1029, 1037–1099, and 1120–1135; these read KEAE…KERS, EKPD…EKES, KEIE…EKES, and TKKD…EKKL. The span at 1136-1146 shows a compositional bias: polar residues; the sequence is SSVSPTTTAVE. Over residues 1147 to 1169 the composition is skewed to basic and acidic residues; that stretch reads QSRDETKELEMDTKEDSEKEKKS. Low complexity-rich tracts occupy residues 1170-1180 and 1192-1203; these read STTTTAAASES and TTTTTTTTNTTT. Residues 1206–1218 show a composition bias toward basic and acidic residues; it reads PTHKDKESSKNDD. The segment covering 1219–1228 has biased composition (low complexity); sequence TTTTTTTTTT. Positions 1229–1239 are enriched in polar residues; sequence KSAKSPNSSPT. The span at 1240–1263 shows a compositional bias: basic and acidic residues; that stretch reads RSDEVVEPHQDASQEEINKRKLED. Composition is skewed to low complexity over residues 1277–1289 and 1315–1337; these read STPS…STPS and SSSS…TNSS. The segment covering 1339–1374 has biased composition (basic and acidic residues); the sequence is KNERDRDRERERERERDREREREREREREREREKNK.

The protein belongs to the CYC8/SSN6 family. In terms of assembly, associates with tupA to form the trfA-tupA corepressor complex.

It is found in the nucleus. Acts as a component of the trfA-tupA corepressor complex which is involved in the repression of many genes in a wide variety of physiological processes. May also be involved in the derepression of at least some target genes. The complex is recruited to target genes by interaction with DNA-bound transcriptional repressors. The complex recruits histone deacetylases to produce a repressive chromatin structure, interacts with hypoacetylated N-terminal tails of histones H3 and H4 that have been programmed for repression by the action of histone deacetylases and interferes directly with the transcriptional machinery by associating with the RNA polymerase II mediator complex. Required for normal growth and for aggregation in early development. Required for a proper chemotactic response to cAMP. This is General transcriptional corepressor trfA (trfA) from Dictyostelium discoideum (Social amoeba).